The primary structure comprises 160 residues: Biogenesis of lysosome-related organelles complex 1 subunit 5 (160 aa).

It belongs to the BLOC1S5 family. In terms of assembly, component of the biogenesis of lysosome-related organelles complex-1 (BLOC-1) composed of Blos1, Blos2, Blos3, Blos4, Dysb, Muted, Pldn and Snapin.

Component of the biogenesis of lysosome-related organelles complex-1 (BLOC-1) involved in pigment granule biogenesis. The chain is Biogenesis of lysosome-related organelles complex 1 subunit 5 from Drosophila melanogaster (Fruit fly).